A 270-amino-acid chain; its full sequence is Cyclohexanol dehydrogenase (270 aa).

R19, D40, D78, V79, N105, Y176, K180, I209, and T211 together coordinate NAD(+). Y176 acts as the Proton acceptor in catalysis.

It belongs to the short-chain dehydrogenases/reductases (SDR) family. Homodimer.

The protein resides in the cytoplasm. It catalyses the reaction cyclohexanol + NAD(+) = cyclohexanone + NADH + H(+). With respect to regulation, activity is enhanced by the addition of Ba(2+) and Mg(2+), but inhibited by the addition of Al(3+), Ca(2+), Co(2+), Cu(2+), Mn(2+) and Zn(2+). In terms of biological role, catalyzes the oxidation of cyclohexanol to cyclohexanone. Can also use a broad range of other alcohols, including trans-cyclohexane-1,2-diol, trans-cyclopentane-1,2-diol, cyclopentanol, hexane-1,2-diol, ethanol, 1-propanol, 1-butanol, 1-pentanol and 1-hexanol. The sequence is that of Cyclohexanol dehydrogenase from Rhodococcus sp. (strain TK6).